Here is an 80-residue protein sequence, read N- to C-terminus: Putative antitoxin VapB44 (80 aa).

A disordered region spans residues 40 to 68 (NQNPQPAASQEDAFHGFEPLPHRGGAVSN).

Its function is as follows. Possibly the antitoxin component of a type II toxin-antitoxin (TA) system. Its cognate toxin is VapC44 (Potential). The chain is Putative antitoxin VapB44 (vapB44) from Mycobacterium tuberculosis (strain CDC 1551 / Oshkosh).